A 461-amino-acid polypeptide reads, in one-letter code: GTPase Der (461 aa).

EngA-type G domains are found at residues 2–164 and 197–369; these read QSII…NENF and IKVG…ANFT. Residues 8 to 15, 55 to 59, 116 to 119, 203 to 210, 250 to 254, and 314 to 317 each bind GTP; these read GKPNVGKS, DSGGL, NKID, GRVNVGKS, DTAGI, and NKWD. The region spanning 370-454 is the KH-like domain; sequence QKIPTAKLNA…PLIIVSRKKG (85 aa).

It belongs to the TRAFAC class TrmE-Era-EngA-EngB-Septin-like GTPase superfamily. EngA (Der) GTPase family. As to quaternary structure, associates with the 50S ribosomal subunit.

In terms of biological role, GTPase that plays an essential role in the late steps of ribosome biogenesis. The polypeptide is GTPase Der (Campylobacter lari (strain RM2100 / D67 / ATCC BAA-1060)).